Reading from the N-terminus, the 258-residue chain is Protein T1 (258 aa).

The first 17 residues, 1 to 17, serve as a signal peptide directing secretion; the sequence is MRRLCIILLVYVYATFA. Residues N67, N151, and N172 are each glycosylated (N-linked (GlcNAc...) asparagine; by host).

This sequence belongs to the poxviruses A41 family.

The polypeptide is Protein T1 (Rabbit fibroma virus (strain Kasza) (RFV)).